The following is a 239-amino-acid chain: Riboflavin synthase (239 aa).

Lumazine-binding repeat units lie at residues 1–105 (MFTG…MGGH) and 106–205 (VVQG…EKQI). 2,4-dihydroxypteridine is bound by residues 4-6 (GLV), 54-56 (CLT), 70-75 (GISPET), 109-111 (GHV), Lys-145, 154-156 (SLT), and 170-175 (SMVSYT).

Homotrimer.

It catalyses the reaction 2 6,7-dimethyl-8-(1-D-ribityl)lumazine + H(+) = 5-amino-6-(D-ribitylamino)uracil + riboflavin. The protein operates within cofactor biosynthesis; riboflavin biosynthesis; riboflavin from 2-hydroxy-3-oxobutyl phosphate and 5-amino-6-(D-ribitylamino)uracil: step 2/2. In terms of biological role, catalyzes the dismutation of two molecules of 6,7-dimethyl-8-ribityllumazine, resulting in the formation of riboflavin and 5-amino-6-(D-ribitylamino)uracil. This is Riboflavin synthase (RIB5) from Meyerozyma guilliermondii (strain ATCC 6260 / CBS 566 / DSM 6381 / JCM 1539 / NBRC 10279 / NRRL Y-324) (Yeast).